The following is a 393-amino-acid chain: Digeranylgeranylglycerophospholipid reductase (393 aa).

FAD contacts are provided by alanine 13, aspartate 32, cysteine 43, alanine 44, glycine 46, arginine 95, valine 119, aspartate 274, and glycine 286. Arginine 327 and glycine 363 together coordinate a 2,3-bis-O-(geranylgeranyl)-sn-glycerol 1-phospholipid.

It belongs to the geranylgeranyl reductase family. DGGGPL reductase subfamily. The cofactor is FAD.

It catalyses the reaction a 2,3-bis-O-phytanyl-sn-glycerol 1-phospholipid + 8 A = a 2,3-bis-O-(geranylgeranyl)-sn-glycerol 1-phospholipid + 8 AH2. The catalysed reaction is 2,3-bis-O-(phytanyl)-sn-glycerol 1-phosphate + 8 A = 2,3-bis-O-(geranylgeranyl)-sn-glycerol 1-phosphate + 8 AH2. The enzyme catalyses CDP-2,3-bis-O-(geranylgeranyl)-sn-glycerol + 8 AH2 = CDP-2,3-bis-O-(phytanyl)-sn-glycerol + 8 A. It carries out the reaction archaetidylserine + 8 AH2 = 2,3-bis-O-phytanyl-sn-glycero-3-phospho-L-serine + 8 A. Its pathway is membrane lipid metabolism; glycerophospholipid metabolism. Functionally, is involved in the reduction of 2,3-digeranylgeranylglycerophospholipids (unsaturated archaeols) into 2,3-diphytanylglycerophospholipids (saturated archaeols) in the biosynthesis of archaeal membrane lipids. Catalyzes the formation of archaetidic acid (2,3-di-O-phytanyl-sn-glyceryl phosphate) from 2,3-di-O-geranylgeranylglyceryl phosphate (DGGGP) via the hydrogenation of each double bond of the isoprenoid chains. Is also probably able to reduce double bonds of geranyl groups in CDP-2,3-bis-O-(geranylgeranyl)-sn-glycerol and archaetidylserine, thus acting at various stages in the biosynthesis of archaeal membrane lipids. This Pyrococcus horikoshii (strain ATCC 700860 / DSM 12428 / JCM 9974 / NBRC 100139 / OT-3) protein is Digeranylgeranylglycerophospholipid reductase.